We begin with the raw amino-acid sequence, 653 residues long: Bifunctional lysine-specific demethylase and histidyl-hydroxylase NO66 (653 aa).

The segment covering 1 to 12 has biased composition (low complexity); the sequence is MKKATTSAAAKS. Disordered regions lie at residues 1–50 and 65–137; these read MKKA…DMLA and FDDD…LERT. A compositionally biased stretch (polar residues) spans 13–26; sequence QGNSKMQKNANNGT. Position 44 is a phosphoserine (S44). Residues 72 to 86 are compositionally biased toward low complexity; the sequence is STSKKTQSGSAAAAK. S131 carries the post-translational modification Phosphoserine. Phosphothreonine is present on T137. The residue at position 138 (S138) is a Phosphoserine. The tract at residues 184 to 208 is disordered; sequence AEPTEEGNNNNDEKETETIETHKAD. The span at 194-208 shows a compositional bias: basic and acidic residues; that stretch reads NDEKETETIETHKAD. The JmjC domain maps to 300–450; the sequence is FYSDGCSIRL…NLLETLMPMV (151 aa). The Fe cation site is built by H351, D353, and H416.

It belongs to the ROX family. NO66 subfamily. Fe(2+) serves as cofactor.

Its subcellular location is the nucleus. It carries out the reaction N(6),N(6)-dimethyl-L-lysyl(36)-[histone H3] + 2 2-oxoglutarate + 2 O2 = L-lysyl(36)-[histone H3] + 2 formaldehyde + 2 succinate + 2 CO2. In terms of biological role, oxygenase that can act as both a histone lysine demethylase and a ribosomal histidine hydroxylase. Specifically demethylates 'Lys-4' (H3K4me) and 'Lys-36' (H3K36me) of histone H3, thereby playing a central role in histone code. The sequence is that of Bifunctional lysine-specific demethylase and histidyl-hydroxylase NO66 from Drosophila melanogaster (Fruit fly).